Reading from the N-terminus, the 145-residue chain is D-aminoacyl-tRNA deacylase (145 aa).

Positions 137 to 138 (GP) match the Gly-cisPro motif, important for rejection of L-amino acids motif.

This sequence belongs to the DTD family. As to quaternary structure, homodimer.

Its subcellular location is the cytoplasm. It catalyses the reaction glycyl-tRNA(Ala) + H2O = tRNA(Ala) + glycine + H(+). The catalysed reaction is a D-aminoacyl-tRNA + H2O = a tRNA + a D-alpha-amino acid + H(+). Functionally, an aminoacyl-tRNA editing enzyme that deacylates mischarged D-aminoacyl-tRNAs. Also deacylates mischarged glycyl-tRNA(Ala), protecting cells against glycine mischarging by AlaRS. Acts via tRNA-based rather than protein-based catalysis; rejects L-amino acids rather than detecting D-amino acids in the active site. By recycling D-aminoacyl-tRNA to D-amino acids and free tRNA molecules, this enzyme counteracts the toxicity associated with the formation of D-aminoacyl-tRNA entities in vivo and helps enforce protein L-homochirality. This chain is D-aminoacyl-tRNA deacylase, found in Escherichia coli O7:K1 (strain IAI39 / ExPEC).